The following is a 245-amino-acid chain: Tryptophan synthase alpha chain (245 aa).

Active-site proton acceptor residues include Glu-37 and Asp-48.

The protein belongs to the TrpA family. Tetramer of two alpha and two beta chains.

It carries out the reaction (1S,2R)-1-C-(indol-3-yl)glycerol 3-phosphate + L-serine = D-glyceraldehyde 3-phosphate + L-tryptophan + H2O. It participates in amino-acid biosynthesis; L-tryptophan biosynthesis; L-tryptophan from chorismate: step 5/5. Functionally, the alpha subunit is responsible for the aldol cleavage of indoleglycerol phosphate to indole and glyceraldehyde 3-phosphate. The protein is Tryptophan synthase alpha chain of Saccharolobus solfataricus (strain ATCC 35092 / DSM 1617 / JCM 11322 / P2) (Sulfolobus solfataricus).